The sequence spans 1465 residues: Protein clueless (1465 aa).

Residues 1-87 form a disordered region; it reads MALEIDAKNA…SNGHSENGDA (87 aa). A compositionally biased stretch (low complexity) spans 30 to 51; it reads HNNNNNAPAAGEKNLVNGSSAA. Residues 52 to 61 show a composition bias toward basic residues; it reads TKKKGKKNRN. Ser-273 bears the Phosphoserine mark. Residues 427–669 enclose the Clu domain; the sequence is RAEDAFSSKL…RTFPPDVNFL (243 aa). Residues 742-767 show a composition bias toward basic and acidic residues; sequence AEKQEEPNEEQPEKTEEQPAEKEESK. Disordered regions lie at residues 742 to 776 and 962 to 1021; these read AEKQ…TKSA and VSSD…SNSD. Basic residues predominate over residues 970–986; sequence KQPRNNSGKHNKHKAAK. Low complexity-rich tracts occupy residues 987-1003 and 1010-1020; these read ASKP…ATAA and ATTSGATSSNS. TPR repeat units follow at residues 1114 to 1147, 1240 to 1273, and 1275 to 1308; these read AYNF…LNNV, ALID…NLKY, and GNKA…EKET. Residues 1428 to 1465 form a disordered region; it reads NNNDNASETEQPKDEASAAGTPTQLTNGSEESTATVSS. The span at 1447-1465 shows a compositional bias: polar residues; sequence GTPTQLTNGSEESTATVSS.

It belongs to the CLU family.

It localises to the cytoplasm. MRNA-binding protein involved in proper cytoplasmic distribution of mitochondria. The sequence is that of Protein clueless from Drosophila virilis (Fruit fly).